A 115-amino-acid chain; its full sequence is Nucleoid-associated protein LBL_0065 (115 aa).

It belongs to the YbaB/EbfC family. Homodimer.

It is found in the cytoplasm. Its subcellular location is the nucleoid. Binds to DNA and alters its conformation. May be involved in regulation of gene expression, nucleoid organization and DNA protection. This is Nucleoid-associated protein LBL_0065 from Leptospira borgpetersenii serovar Hardjo-bovis (strain L550).